Consider the following 162-residue polypeptide: D-aminoacyl-tRNA deacylase (162 aa).

The Gly-cisPro motif, important for rejection of L-amino acids motif lies at 145 to 146 (GP).

It belongs to the DTD family. In terms of assembly, homodimer.

The protein resides in the cytoplasm. It catalyses the reaction glycyl-tRNA(Ala) + H2O = tRNA(Ala) + glycine + H(+). The enzyme catalyses a D-aminoacyl-tRNA + H2O = a tRNA + a D-alpha-amino acid + H(+). Its function is as follows. An aminoacyl-tRNA editing enzyme that deacylates mischarged D-aminoacyl-tRNAs. Also deacylates mischarged glycyl-tRNA(Ala), protecting cells against glycine mischarging by AlaRS. Acts via tRNA-based rather than protein-based catalysis; rejects L-amino acids rather than detecting D-amino acids in the active site. By recycling D-aminoacyl-tRNA to D-amino acids and free tRNA molecules, this enzyme counteracts the toxicity associated with the formation of D-aminoacyl-tRNA entities in vivo and helps enforce protein L-homochirality. The polypeptide is D-aminoacyl-tRNA deacylase (Bifidobacterium longum (strain DJO10A)).